The following is a 485-amino-acid chain: Probable cobyric acid synthase (485 aa).

Residues 250–435 (EVEIAVIRLP…LHGLFDNENI (186 aa)) enclose the GATase cobBQ-type domain. The Nucleophile role is filled by C328. H427 is an active-site residue.

This sequence belongs to the CobB/CobQ family. CobQ subfamily.

The protein operates within cofactor biosynthesis; adenosylcobalamin biosynthesis. In terms of biological role, catalyzes amidations at positions B, D, E, and G on adenosylcobyrinic A,C-diamide. NH(2) groups are provided by glutamine, and one molecule of ATP is hydrogenolyzed for each amidation. The sequence is that of Probable cobyric acid synthase from Methanosarcina acetivorans (strain ATCC 35395 / DSM 2834 / JCM 12185 / C2A).